The primary structure comprises 497 residues: Beta-glucosidase 8 (497 aa).

Positions 1–22 are cleaved as a signal peptide; it reads MKHFNLLSIILVIVLATSYIDA. A beta-D-glucoside is bound at residue Gln-42. Asn-65 is a glycosylation site (N-linked (GlcNAc...) asparagine). Residues His-139 and 184–185 contribute to the a beta-D-glucoside site; that span reads NE. Catalysis depends on Glu-185, which acts as the Proton donor. Asn-202 carries an N-linked (GlcNAc...) asparagine glycan. Tyr-319 contacts a beta-D-glucoside. An N-linked (GlcNAc...) asparagine glycan is attached at Asn-354. A beta-D-glucoside contacts are provided by Glu-387, Trp-430, and Phe-446. Glu-387 (nucleophile) is an active-site residue. 3 N-linked (GlcNAc...) asparagine glycosylation sites follow: Asn-452, Asn-474, and Asn-490.

It belongs to the glycosyl hydrolase 1 family.

It carries out the reaction Hydrolysis of terminal, non-reducing beta-D-glucosyl residues with release of beta-D-glucose.. The polypeptide is Beta-glucosidase 8 (Arabidopsis thaliana (Mouse-ear cress)).